A 77-amino-acid chain; its full sequence is Small nuclear ribonucleoprotein G (77 aa).

A Sm domain is found at 2-77; the sequence is VSTPELKKYM…IISLEALDAI (76 aa).

This sequence belongs to the snRNP Sm proteins family. As to quaternary structure, component of the Sm core complex, present in spliceosomal snRNP U1, U2, U4/U6 and U5. The core complex contains SMB1, SMD1, SMD2, SMD3, SME1, SMX3 and SMX2 (Sm proteins B, D1, D2, D3, E, F and G, respectively), and is probably a heptameric ring structure. SMX2 specifically interacts with SME1. Belongs to the CWC complex (or CEF1-associated complex), a spliceosome sub-complex reminiscent of a late-stage spliceosome composed of the U2, U5 and U6 snRNAs and at least BUD13, BUD31, BRR2, CDC40, CEF1, CLF1, CUS1, CWC2, CWC15, CWC21, CWC22, CWC23, CWC24, CWC25, CWC27, ECM2, HSH155, IST3, ISY1, LEA1, MSL1, NTC20, PRP8, PRP9, PRP11, PRP19, PRP21, PRP22, PRP45, PRP46, SLU7, SMB1, SMD1, SMD2, SMD3, SMX2, SMX3, SNT309, SNU114, SPP2, SYF1, SYF2, RSE1 and YJU2. Component of the U4/U6-U5 tri-snRNP complex composed of the U4, U6 and U5 snRNAs and at least PRP3, PRP4, PRP6, PRP8, PRP18, PRP31, PRP38, SNU13, SNU23, SNU66, SNU114, SPP381, SMB1, SMD1, SMD2, SMD3, SMX2, SMX3, LSM2, LSM3, LSM4, LSM5, LSM6, LSM7, LSM8, BRR2 and DIB1.

It localises to the nucleus. The protein localises to the cytoplasm. Functionally, plays a role in pre-mRNA splicing as a core component of the spliceosomal U1, U2, U4 and U5 small nuclear ribonucleoproteins (snRNPs), the building blocks of the spliceosome. In Saccharomyces cerevisiae (strain ATCC 204508 / S288c) (Baker's yeast), this protein is Small nuclear ribonucleoprotein G (SMX2).